A 356-amino-acid polypeptide reads, in one-letter code: Probable G-protein coupled receptor 32 (356 aa).

Topologically, residues 1 to 44 (MNGVSEGTRGCSDRQPGVLTRDRSCSRKMNSSGCLSEEVGSLRP) are extracellular. An N-linked (GlcNAc...) asparagine glycan is attached at asparagine 30. Residues 45 to 67 (LTVVILSASIVVGVLGNGLVLWM) form a helical membrane-spanning segment. Residues 68 to 78 (TVFRMARTVST) are Cytoplasmic-facing. A helical membrane pass occupies residues 79–100 (VCFFHLALADFMLSLSLPIAMY). Over 101-116 (YIVSRQWLLGEWACKL) the chain is Extracellular. An intrachain disulfide couples cysteine 114 to cysteine 191. Residues 117–137 (YITFVFLSYFASNCLLVFISV) form a helical membrane-spanning segment. The Cytoplasmic segment spans residues 138-156 (DRCISVLYPVWALNHRTVQ). Residues 157-178 (RASWLAFGVWLLAAALCSAHLK) form a helical membrane-spanning segment. At 179 to 220 (FRTTRKWNGCTHCYLAFNSDNETAQIWIEGVVEGHIIGTIGH) the chain is on the extracellular side. The N-linked (GlcNAc...) asparagine glycan is linked to asparagine 199. The chain crosses the membrane as a helical span at residues 221–241 (FLLGFLGPLAIIGTCAHLIRA). The Cytoplasmic segment spans residues 242 to 257 (KLLREGWVHANRPKRL). A helical transmembrane segment spans residues 258-280 (LLVLVSAFFIFWSPFNVVLLVHL). Over 281 to 300 (WRRVMLKEIYHPRMLLILQA) the chain is Extracellular. Residues 301 to 320 (SFALGCVNSSLNPFLYVFVG) traverse the membrane as a helical segment. Residues 321–356 (RDFQEKFFQSLTSALARAFGEEEFLSSCPRGNAPRE) are Cytoplasmic-facing.

The protein belongs to the G-protein coupled receptor 1 family. As to expression, expressed in resting primary human macrophages.

The protein resides in the cell membrane. Functionally, G-protein coupled receptor that binds to several ligands including resolvin D1 (RvD1) with high affinity, leading to rapid and transient activation of numerous intracellular signaling pathways. In macrophages, enhances the RvD1-stimulated phagocytic and clearance functions. Macrophages migrate less toward different chemoattractant stimuli but phagocytose more microbial particles. Prevents the increase in Ca(2+) and activation of ERK1/2 used by histamine and its H1 receptor subtype to induce goblet cell secretion by activating PKC and GRK2 to counter-regulate the histamine receptor. This is Probable G-protein coupled receptor 32 (GPR32) from Homo sapiens (Human).